Reading from the N-terminus, the 333-residue chain is Ketol-acid reductoisomerase (NADP(+)) (333 aa).

The region spanning 1–179 is the KARI N-terminal Rossmann domain; that stretch reads MFYDDDADLS…GGTRAGVIKT (179 aa). NADP(+) contacts are provided by residues 22–25, K45, S48, S50, and 80–83; these read YGSQ and DTAQ. The active site involves H105. G131 lines the NADP(+) pocket. Residues 180 to 325 form the KARI C-terminal knotted domain; the sequence is TFKDETETDL…KKLRDLMSWV (146 aa). Mg(2+) contacts are provided by D188, E192, E224, and E228. Position 249 (S249) interacts with substrate.

It belongs to the ketol-acid reductoisomerase family. Mg(2+) serves as cofactor.

It carries out the reaction (2R)-2,3-dihydroxy-3-methylbutanoate + NADP(+) = (2S)-2-acetolactate + NADPH + H(+). The enzyme catalyses (2R,3R)-2,3-dihydroxy-3-methylpentanoate + NADP(+) = (S)-2-ethyl-2-hydroxy-3-oxobutanoate + NADPH + H(+). It participates in amino-acid biosynthesis; L-isoleucine biosynthesis; L-isoleucine from 2-oxobutanoate: step 2/4. It functions in the pathway amino-acid biosynthesis; L-valine biosynthesis; L-valine from pyruvate: step 2/4. Involved in the biosynthesis of branched-chain amino acids (BCAA). Catalyzes an alkyl-migration followed by a ketol-acid reduction of (S)-2-acetolactate (S2AL) to yield (R)-2,3-dihydroxy-isovalerate. In the isomerase reaction, S2AL is rearranged via a Mg-dependent methyl migration to produce 3-hydroxy-3-methyl-2-ketobutyrate (HMKB). In the reductase reaction, this 2-ketoacid undergoes a metal-dependent reduction by NADPH to yield (R)-2,3-dihydroxy-isovalerate. The polypeptide is Ketol-acid reductoisomerase (NADP(+)) (Mycobacterium bovis (strain ATCC BAA-935 / AF2122/97)).